The primary structure comprises 326 residues: Phenylalanine--tRNA ligase alpha subunit (326 aa).

Position 251 (glutamate 251) interacts with Mg(2+).

It belongs to the class-II aminoacyl-tRNA synthetase family. Phe-tRNA synthetase alpha subunit type 1 subfamily. In terms of assembly, tetramer of two alpha and two beta subunits. The cofactor is Mg(2+).

It is found in the cytoplasm. The catalysed reaction is tRNA(Phe) + L-phenylalanine + ATP = L-phenylalanyl-tRNA(Phe) + AMP + diphosphate + H(+). The chain is Phenylalanine--tRNA ligase alpha subunit from Pseudoalteromonas atlantica (strain T6c / ATCC BAA-1087).